We begin with the raw amino-acid sequence, 543 residues long: Probable bifunctional tRNA threonylcarbamoyladenosine biosynthesis protein (543 aa).

A kae1 region spans residues 1 to 329 (MDISKDLICI…YRSDMVEVNW (329 aa)). 3 residues coordinate Fe cation: histidine 112, histidine 116, and tyrosine 133. L-threonylcarbamoyladenylate is bound by residues 133–137 (YVSGG), aspartate 165, glycine 178, glutamate 182, and asparagine 262. Aspartate 290 serves as a coordination point for Fe cation. The Protein kinase domain maps to 342–543 (IIPEHLIGKG…KEVEKRARYL (202 aa)). ATP contacts are provided by residues 348–356 (IGKGAEADI) and lysine 369. Aspartate 461 (proton acceptor; for kinase activity) is an active-site residue.

The protein in the N-terminal section; belongs to the KAE1 / TsaD family. This sequence in the C-terminal section; belongs to the protein kinase superfamily. Tyr protein kinase family. BUD32 subfamily. In terms of assembly, component of the KEOPS complex that consists of Kae1, Bud32, Cgi121 and Pcc1; the whole complex dimerizes. The cofactor is Fe(2+).

The protein localises to the cytoplasm. The catalysed reaction is L-seryl-[protein] + ATP = O-phospho-L-seryl-[protein] + ADP + H(+). The enzyme catalyses L-threonyl-[protein] + ATP = O-phospho-L-threonyl-[protein] + ADP + H(+). It carries out the reaction L-threonylcarbamoyladenylate + adenosine(37) in tRNA = N(6)-L-threonylcarbamoyladenosine(37) in tRNA + AMP + H(+). In terms of biological role, required for the formation of a threonylcarbamoyl group on adenosine at position 37 (t(6)A37) in tRNAs that read codons beginning with adenine. Is a component of the KEOPS complex that is probably involved in the transfer of the threonylcarbamoyl moiety of threonylcarbamoyl-AMP (TC-AMP) to the N6 group of A37. The Kae1 domain likely plays a direct catalytic role in this reaction. The Bud32 domain probably displays kinase activity that regulates Kae1 function. In Methanococcus maripaludis (strain C6 / ATCC BAA-1332), this protein is Probable bifunctional tRNA threonylcarbamoyladenosine biosynthesis protein.